We begin with the raw amino-acid sequence, 322 residues long: Adenine deaminase (322 aa).

Residues His-11, His-13, and His-189 each coordinate Zn(2+). Glu-192 functions as the Proton donor in the catalytic mechanism. Asp-270 lines the Zn(2+) pocket. Substrate is bound at residue Asp-271.

Belongs to the metallo-dependent hydrolases superfamily. Adenosine and AMP deaminases family. Adenine deaminase type 2 subfamily. Zn(2+) is required as a cofactor.

It catalyses the reaction adenine + H2O + H(+) = hypoxanthine + NH4(+). Catalyzes the hydrolytic deamination of adenine to hypoxanthine. Plays an important role in the purine salvage pathway and in nitrogen catabolism. The polypeptide is Adenine deaminase (Rhizobium leguminosarum bv. trifolii (strain WSM2304)).